Here is a 476-residue protein sequence, read N- to C-terminus: Cysteine--tRNA ligase (476 aa).

Position 28 (cysteine 28) interacts with Zn(2+). A 'HIGH' region motif is present at residues 30-40 (VTTYDFCHIGH). 3 residues coordinate Zn(2+): cysteine 215, histidine 241, and glutamate 245. The 'KMSKS' region signature appears at 273 to 277 (KMSKS). ATP is bound at residue lysine 276.

This sequence belongs to the class-I aminoacyl-tRNA synthetase family. Monomer. It depends on Zn(2+) as a cofactor.

It localises to the cytoplasm. It catalyses the reaction tRNA(Cys) + L-cysteine + ATP = L-cysteinyl-tRNA(Cys) + AMP + diphosphate. This Buchnera aphidicola subsp. Cinara cedri (strain Cc) protein is Cysteine--tRNA ligase.